A 270-amino-acid polypeptide reads, in one-letter code: Putative pyruvate, phosphate dikinase regulatory protein 2 (270 aa).

151–158 contacts ADP; that stretch reads GVSRTSKT.

It belongs to the pyruvate, phosphate/water dikinase regulatory protein family. PDRP subfamily.

It catalyses the reaction N(tele)-phospho-L-histidyl/L-threonyl-[pyruvate, phosphate dikinase] + ADP = N(tele)-phospho-L-histidyl/O-phospho-L-threonyl-[pyruvate, phosphate dikinase] + AMP + H(+). The enzyme catalyses N(tele)-phospho-L-histidyl/O-phospho-L-threonyl-[pyruvate, phosphate dikinase] + phosphate + H(+) = N(tele)-phospho-L-histidyl/L-threonyl-[pyruvate, phosphate dikinase] + diphosphate. In terms of biological role, bifunctional serine/threonine kinase and phosphorylase involved in the regulation of the pyruvate, phosphate dikinase (PPDK) by catalyzing its phosphorylation/dephosphorylation. This is Putative pyruvate, phosphate dikinase regulatory protein 2 from Listeria innocua serovar 6a (strain ATCC BAA-680 / CLIP 11262).